The primary structure comprises 543 residues: CTP synthase (543 aa).

The tract at residues 1–267 (MKQTKYIFVT…LSPIAEILDL (267 aa)) is amidoligase domain. Residue Ser-15 coordinates CTP. Ser-15 contributes to the UTP binding site. ATP contacts are provided by residues 16 to 21 (SLGKGI) and Asp-73. Mg(2+) is bound by residues Asp-73 and Glu-141. Residues 148 to 150 (DIE), 188 to 193 (KTKPTQ), and Lys-224 contribute to the CTP site. Residues 188–193 (KTKPTQ) and Lys-224 each bind UTP. The region spanning 292 to 543 (KIAFVGKYVD…IKAAINYEDN (252 aa)) is the Glutamine amidotransferase type-1 domain. Gly-354 is a binding site for L-glutamine. Cys-381 serves as the catalytic Nucleophile; for glutamine hydrolysis. L-glutamine is bound by residues 382-385 (LGMQ), Glu-405, and Arg-473. Residues His-516 and Glu-518 contribute to the active site.

This sequence belongs to the CTP synthase family. In terms of assembly, homotetramer.

It carries out the reaction UTP + L-glutamine + ATP + H2O = CTP + L-glutamate + ADP + phosphate + 2 H(+). The catalysed reaction is L-glutamine + H2O = L-glutamate + NH4(+). The enzyme catalyses UTP + NH4(+) + ATP = CTP + ADP + phosphate + 2 H(+). Its pathway is pyrimidine metabolism; CTP biosynthesis via de novo pathway; CTP from UDP: step 2/2. Its activity is regulated as follows. Allosterically activated by GTP, when glutamine is the substrate; GTP has no effect on the reaction when ammonia is the substrate. The allosteric effector GTP functions by stabilizing the protein conformation that binds the tetrahedral intermediate(s) formed during glutamine hydrolysis. Inhibited by the product CTP, via allosteric rather than competitive inhibition. Catalyzes the ATP-dependent amination of UTP to CTP with either L-glutamine or ammonia as the source of nitrogen. Regulates intracellular CTP levels through interactions with the four ribonucleotide triphosphates. The sequence is that of CTP synthase from Campylobacter jejuni subsp. jejuni serotype O:23/36 (strain 81-176).